A 344-amino-acid chain; its full sequence is Hyoscyamine 6-dioxygenase (344 aa).

One can recognise a Fe2OG dioxygenase domain in the interval Q193–P293. H217, D219, and H274 together coordinate Fe cation. R284 is a 2-oxoglutarate binding site.

This sequence belongs to the iron/ascorbate-dependent oxidoreductase family. As to quaternary structure, monomer. The cofactor is Fe(2+). Requires L-ascorbate as cofactor. Post-translationally, the N-terminus is blocked. In terms of tissue distribution, root.

It carries out the reaction L-hyoscyamine + 2-oxoglutarate + O2 = (6S)-6-hydroxyhyoscyamine + succinate + CO2. The protein operates within alkaloid biosynthesis; scopolamine biosynthesis. The polypeptide is Hyoscyamine 6-dioxygenase (H6H) (Hyoscyamus niger (Black henbane)).